Here is a 158-residue protein sequence, read N- to C-terminus: UPF0329 protein ECU06_0050 (158 aa).

Belongs to the UPF0329 family.

The chain is UPF0329 protein ECU06_0050 from Encephalitozoon cuniculi (strain GB-M1) (Microsporidian parasite).